The sequence spans 125 residues: MAFDKDAFLTALDSMTVLELNDLVKAIEEKFGVSAAAMAAPAGAGGGAAAAVAEEQTEFNVMLMDAGANKVSAIKAVREITGLGLKEAKDLVEAAPKAVKEGLSKADAEAAKKKLEDAGAKVELK.

The protein belongs to the bacterial ribosomal protein bL12 family. In terms of assembly, homodimer. Part of the ribosomal stalk of the 50S ribosomal subunit. Forms a multimeric L10(L12)X complex, where L10 forms an elongated spine to which 2 to 4 L12 dimers bind in a sequential fashion. Binds GTP-bound translation factors.

Its function is as follows. Forms part of the ribosomal stalk which helps the ribosome interact with GTP-bound translation factors. Is thus essential for accurate translation. The polypeptide is Large ribosomal subunit protein bL12 (Variovorax paradoxus (strain S110)).